Reading from the N-terminus, the 251-residue chain is Hydroxyacylglutathione hydrolase (251 aa).

Residues H53, H55, D57, H58, H110, D127, and H165 each coordinate Zn(2+).

Belongs to the metallo-beta-lactamase superfamily. Glyoxalase II family. Monomer. Zn(2+) serves as cofactor.

The catalysed reaction is an S-(2-hydroxyacyl)glutathione + H2O = a 2-hydroxy carboxylate + glutathione + H(+). It participates in secondary metabolite metabolism; methylglyoxal degradation; (R)-lactate from methylglyoxal: step 2/2. Its function is as follows. Thiolesterase that catalyzes the hydrolysis of S-D-lactoyl-glutathione to form glutathione and D-lactic acid. This chain is Hydroxyacylglutathione hydrolase, found in Blochmanniella pennsylvanica (strain BPEN).